The primary structure comprises 341 residues: ATPase GET3 (341 aa).

34-41 (KGGVGKTT) serves as a coordination point for ATP. The active site involves aspartate 63. The ATP site is built by glutamate 245 and asparagine 272. Zn(2+) contacts are provided by cysteine 283 and cysteine 286.

Belongs to the arsA ATPase family. As to quaternary structure, homodimer.

The protein resides in the cytoplasm. It is found in the endoplasmic reticulum. ATPase required for the post-translational delivery of tail-anchored (TA) proteins to the endoplasmic reticulum. Recognizes and selectively binds the transmembrane domain of TA proteins in the cytosol. This complex then targets to the endoplasmic reticulum by membrane-bound receptors, where the tail-anchored protein is released for insertion. This process is regulated by ATP binding and hydrolysis. ATP binding drives the homodimer towards the closed dimer state, facilitating recognition of newly synthesized TA membrane proteins. ATP hydrolysis is required for insertion. Subsequently, the homodimer reverts towards the open dimer state, lowering its affinity for the membrane-bound receptor, and returning it to the cytosol to initiate a new round of targeting. This Paracoccidioides brasiliensis (strain Pb18) protein is ATPase GET3.